We begin with the raw amino-acid sequence, 129 residues long: GEL complex subunit OPTI (129 aa).

The Cytoplasmic portion of the chain corresponds to 1–44 (MSGGRRKEEPPQPQLANGALKVSVWSKVLRSDAAWDDKDEFLDV). Residues 45–65 (IYWFRQIIALVLGVIWGVLPL) traverse the membrane as a helical segment. Arginine 66 is a topological domain (lumenal). The chain crosses the membrane as a helical span at residues 67–84 (GFLGIAGFCLINAGVLYL). Residues 85–103 (YFSNYLQIDEEEYGGTWEL) are Cytoplasmic-facing. A helical membrane pass occupies residues 104–127 (TKEGFMTSFALFMVIWIIFYTAIH). Residues 128 to 129 (YD) lie on the Lumenal side of the membrane.

It belongs to the EMC6 family. In terms of assembly, component of the GET- and EMC-like (GEL) complex, composed of RAB5IF/OPTI and TMCO1. The GEL complex is part of the multi-pass translocon (MPT) complex, composed of three subcomplexes, the GEL complex (composed of RAB5IF/OPTI and TMCO1), the BOS complex (composed of NCLN/Nicalin, NOMO1 and TMEM147) and the PAT complex (composed of WDR83OS/Asterix and CCDC47). The MPT complex associates with the SEC61 complex. Interacts with NDUFS3, NDUFA4, NDUFV1, NDUFA9 and NDUFS8 of the mitochondrial membrane respiratory chain NADH dehydrogenase (Complex I). Interacts with UQCRC2 of the ubiquinol-cytochrome c reductase complex (Complex III). Interacts with COX5A and COX7C of the cytochrome c oxidase complex (Complex IV). As to expression, expressed in neuronal cells.

Its subcellular location is the endoplasmic reticulum membrane. It localises to the mitochondrion inner membrane. Its function is as follows. Component of the multi-pass translocon (MPT) complex that mediates insertion of multi-pass membrane proteins into the lipid bilayer of membranes. The MPT complex takes over after the SEC61 complex: following membrane insertion of the first few transmembrane segments of proteins by the SEC61 complex, the MPT complex occludes the lateral gate of the SEC61 complex to promote insertion of subsequent transmembrane regions. Within the MPT complex, the GEL subcomplex may mediate insertion of transmembrane regions into the membrane. In addition to its role in multi-pass membrane insertion, RAB5IF/OPTI also acts as an assembly factor for mitochondrial respiratory complexes. This chain is GEL complex subunit OPTI, found in Mus musculus (Mouse).